The following is a 368-amino-acid chain: Hydrophobic dipeptide epimerase (368 aa).

Substrate is bound by residues Thr-143 and 168–170; that span reads KIK. Positions 197, 225, and 253 each coordinate Mg(2+). Residues Lys-277 and 329–331 contribute to the substrate site; that span reads DMD.

Belongs to the mandelate racemase/muconate lactonizing enzyme family. Requires Mg(2+) as cofactor.

Its function is as follows. Catalyzes the epimerization of various hydrophobic dipeptides, such as L-Ala-L-Phe. Has epimerase activity with L-Ala-L-Thr, L-Ala-L-Met, L-Ala-L-Tyr, as well as L-Phe-L-Met, L-Phe-L-Ser and L-Phe-L-Thr (in vitro). This is Hydrophobic dipeptide epimerase from Citrifermentans bemidjiense (strain ATCC BAA-1014 / DSM 16622 / JCM 12645 / Bem) (Geobacter bemidjiensis).